A 94-amino-acid polypeptide reads, in one-letter code: Putative membrane protein insertion efficiency factor (94 aa).

The protein belongs to the UPF0161 family.

Its subcellular location is the cell inner membrane. Functionally, could be involved in insertion of integral membrane proteins into the membrane. In Albidiferax ferrireducens (strain ATCC BAA-621 / DSM 15236 / T118) (Rhodoferax ferrireducens), this protein is Putative membrane protein insertion efficiency factor.